The following is a 305-amino-acid chain: UDP-3-O-acyl-N-acetylglucosamine deacetylase (305 aa).

Residues H79, H238, and D242 each contribute to the Zn(2+) site. Catalysis depends on H265, which acts as the Proton donor.

Belongs to the LpxC family. It depends on Zn(2+) as a cofactor.

The catalysed reaction is a UDP-3-O-[(3R)-3-hydroxyacyl]-N-acetyl-alpha-D-glucosamine + H2O = a UDP-3-O-[(3R)-3-hydroxyacyl]-alpha-D-glucosamine + acetate. The protein operates within glycolipid biosynthesis; lipid IV(A) biosynthesis; lipid IV(A) from (3R)-3-hydroxytetradecanoyl-[acyl-carrier-protein] and UDP-N-acetyl-alpha-D-glucosamine: step 2/6. In terms of biological role, catalyzes the hydrolysis of UDP-3-O-myristoyl-N-acetylglucosamine to form UDP-3-O-myristoylglucosamine and acetate, the committed step in lipid A biosynthesis. The sequence is that of UDP-3-O-acyl-N-acetylglucosamine deacetylase from Klebsiella pneumoniae (strain 342).